The primary structure comprises 30 residues: Thaumatin-like protein (30 aa).

This sequence belongs to the thaumatin family.

It is found in the secreted. Functionally, has antifungal activity against C.comatus, F.oxysporum and P.ostreatus. The protein is Thaumatin-like protein of Phaseolus vulgaris (Kidney bean).